A 116-amino-acid polypeptide reads, in one-letter code: Small ribosomal subunit protein uS10m (116 aa).

This sequence belongs to the universal ribosomal protein uS10 family.

The protein resides in the mitochondrion. This is Small ribosomal subunit protein uS10m (RPS10) from Reclinomonas americana.